A 702-amino-acid polypeptide reads, in one-letter code: Ribosomal RNA large subunit methyltransferase K/L (702 aa).

Residues 43–154 (LVYQSLMWSR…KETASIALDL (112 aa)) enclose the THUMP domain.

The protein belongs to the methyltransferase superfamily. RlmKL family.

It localises to the cytoplasm. It carries out the reaction guanosine(2445) in 23S rRNA + S-adenosyl-L-methionine = N(2)-methylguanosine(2445) in 23S rRNA + S-adenosyl-L-homocysteine + H(+). The enzyme catalyses guanosine(2069) in 23S rRNA + S-adenosyl-L-methionine = N(2)-methylguanosine(2069) in 23S rRNA + S-adenosyl-L-homocysteine + H(+). Its function is as follows. Specifically methylates the guanine in position 2445 (m2G2445) and the guanine in position 2069 (m7G2069) of 23S rRNA. The polypeptide is Ribosomal RNA large subunit methyltransferase K/L (Escherichia coli O139:H28 (strain E24377A / ETEC)).